The following is a 139-amino-acid chain: Low molecular weight protein-tyrosine-phosphatase PtpB (139 aa).

The active-site Nucleophile is the C7. R13 is a catalytic residue. The active-site Proton donor is the D111.

This sequence belongs to the low molecular weight phosphotyrosine protein phosphatase family.

The catalysed reaction is O-phospho-L-tyrosyl-[protein] + H2O = L-tyrosyl-[protein] + phosphate. In terms of biological role, dephosphorylates the phosphotyrosine-containing proteins. This is Low molecular weight protein-tyrosine-phosphatase PtpB (ptpB) from Staphylococcus epidermidis (strain ATCC 35984 / DSM 28319 / BCRC 17069 / CCUG 31568 / BM 3577 / RP62A).